Here is a 301-residue protein sequence, read N- to C-terminus: Acetylglutamate kinase (301 aa).

Residues 68–69 (GG), R90, and N195 each bind substrate.

This sequence belongs to the acetylglutamate kinase family. ArgB subfamily.

It is found in the cytoplasm. The enzyme catalyses N-acetyl-L-glutamate + ATP = N-acetyl-L-glutamyl 5-phosphate + ADP. It participates in amino-acid biosynthesis; L-arginine biosynthesis; N(2)-acetyl-L-ornithine from L-glutamate: step 2/4. In terms of biological role, catalyzes the ATP-dependent phosphorylation of N-acetyl-L-glutamate. The polypeptide is Acetylglutamate kinase (Pseudomonas putida (strain ATCC 700007 / DSM 6899 / JCM 31910 / BCRC 17059 / LMG 24140 / F1)).